The chain runs to 446 residues: Alkylglycerol monooxygenase (446 aa).

The next 2 helical transmembrane spans lie at 43–63 (ATVY…AWKG) and 110–130 (WDSP…YYWF). In terms of domain architecture, Fatty acid hydroxylase spans 118–248 (LTFLGVDFGY…LIIWDRMFGT (131 aa)). A Histidine box-1 motif is present at residues 131–135 (HRMAH). The Histidine box-2 signature appears at 144 to 148 (HQTHH). Residues 167–187 (YFSWMFYWPMAFCIPPSVFAV) traverse the membrane as a helical segment. The short motif at 220–224 (HRVHH) is the Histidine box-3 element. 3 helical membrane-spanning segments follow: residues 339 to 359 (MMHF…KLIL), 362 to 382 (ATLL…GFIF), and 412 to 434 (VPYL…GLKA).

The protein belongs to the sterol desaturase family. TMEM195 subfamily. The cofactor is Fe cation.

It is found in the endoplasmic reticulum membrane. The catalysed reaction is 1-O-(1,2-saturated-alkyl)-sn-glycerol + (6R)-L-erythro-5,6,7,8-tetrahydrobiopterin + O2 = a 1-(1-hydroxyalkyl)-sn-glycerol + (6R)-L-erythro-6,7-dihydrobiopterin + H2O. Functionally, glyceryl-ether monooxygenase that cleaves the O-alkyl bond of ether lipids. Ether lipids are essential components of brain membranes. The sequence is that of Alkylglycerol monooxygenase (agmo) from Xenopus tropicalis (Western clawed frog).